The sequence spans 64 residues: UPF0434 protein Bmul_0750/BMULJ_02510 (64 aa).

Belongs to the UPF0434 family.

The polypeptide is UPF0434 protein Bmul_0750/BMULJ_02510 (Burkholderia multivorans (strain ATCC 17616 / 249)).